Reading from the N-terminus, the 453-residue chain is Probable glycine dehydrogenase (decarboxylating) subunit 1 (453 aa).

This sequence belongs to the GcvP family. N-terminal subunit subfamily. In terms of assembly, the glycine cleavage system is composed of four proteins: P, T, L and H. In this organism, the P 'protein' is a heterodimer of two subunits.

The catalysed reaction is N(6)-[(R)-lipoyl]-L-lysyl-[glycine-cleavage complex H protein] + glycine + H(+) = N(6)-[(R)-S(8)-aminomethyldihydrolipoyl]-L-lysyl-[glycine-cleavage complex H protein] + CO2. Functionally, the glycine cleavage system catalyzes the degradation of glycine. The P protein binds the alpha-amino group of glycine through its pyridoxal phosphate cofactor; CO(2) is released and the remaining methylamine moiety is then transferred to the lipoamide cofactor of the H protein. In Methylococcus capsulatus (strain ATCC 33009 / NCIMB 11132 / Bath), this protein is Probable glycine dehydrogenase (decarboxylating) subunit 1.